A 200-amino-acid polypeptide reads, in one-letter code: Holliday junction resolvase RecU (200 aa).

The interval 1–25 is disordered; the sequence is MTIRYPNGKRYNQASQPQKTPIKTH. Residues 10–25 show a composition bias toward polar residues; sequence RYNQASQPQKTPIKTH. Mg(2+) contacts are provided by Thr85, Asp87, Glu100, and Gln119.

It belongs to the RecU family. Mg(2+) is required as a cofactor.

The protein localises to the cytoplasm. It catalyses the reaction Endonucleolytic cleavage at a junction such as a reciprocal single-stranded crossover between two homologous DNA duplexes (Holliday junction).. Functionally, endonuclease that resolves Holliday junction intermediates in genetic recombination. Cleaves mobile four-strand junctions by introducing symmetrical nicks in paired strands. Promotes annealing of linear ssDNA with homologous dsDNA. Required for DNA repair, homologous recombination and chromosome segregation. This chain is Holliday junction resolvase RecU, found in Bacillus cereus (strain G9842).